A 221-amino-acid polypeptide reads, in one-letter code: Fanconi anemia core complex-associated protein 24 (221 aa).

Belongs to the multisubunit FA complex composed of FANCA, FANCB, FANCC, FANCE, FANCF, FANCG, FANCL/PHF9, FANCM and FAAP24. Interacts with FANCM.

The protein localises to the nucleus. Plays a role in DNA repair through recruitment of the FA core complex to damaged DNA. Regulates FANCD2 monoubiquitination upon DNA damage. Induces chromosomal instability as well as hypersensitivity to DNA cross-linking agents, when repressed. Targets FANCM/FAAP24 complex to the DNA, preferentially to single strand DNA. The chain is Fanconi anemia core complex-associated protein 24 from Mus musculus (Mouse).